The following is a 290-amino-acid chain: tRNA (adenine(58)-N(1))-methyltransferase catalytic subunit TRMT61A (290 aa).

An N-acetylserine modification is found at Ser-2. 5 substrate regions span residues 20–22 (LGH), 35–42 (QTQTRHGV), 64–65 (GW), 85–89 (QILYS), and 110–117 (SGTGSGSV). Residues Leu-87, 114–116 (SGS), Glu-135, Arg-140, 163–164 (DV), and Asp-181 contribute to the S-adenosyl-L-methionine site. 2 substrate regions span residues 180 to 183 (LDIP) and 205 to 212 (SFSPCIEQ). A substrate-binding site is contributed by Thr-279.

The protein belongs to the class I-like SAM-binding methyltransferase superfamily. TRM61 family. Heterotetramer; composed of two copies of TRMT6 and two copies of TRMT61A.

It is found in the nucleus. It carries out the reaction adenosine(58) in tRNA + S-adenosyl-L-methionine = N(1)-methyladenosine(58) in tRNA + S-adenosyl-L-homocysteine + H(+). It catalyses the reaction an adenosine in mRNA + S-adenosyl-L-methionine = an N(1)-methyladenosine in mRNA + S-adenosyl-L-homocysteine + H(+). Functionally, catalytic subunit of tRNA (adenine-N(1)-)-methyltransferase, which catalyzes the formation of N(1)-methyladenine at position 58 (m1A58) in initiator methionyl-tRNA. Catalytic subunit of mRNA N(1)-methyltransferase complex, which mediates methylation of adenosine residues at the N(1) position of a small subset of mRNAs: N(1) methylation takes place in tRNA T-loop-like structures of mRNAs and is only present at low stoichiometries. The protein is tRNA (adenine(58)-N(1))-methyltransferase catalytic subunit TRMT61A (Trmt61a) of Rattus norvegicus (Rat).